A 397-amino-acid polypeptide reads, in one-letter code: Subtilisin-like protease 12 (397 aa).

The signal sequence occupies residues 1-19 (MSIFKMMLIYFAILWVVNA). The propeptide occupies 20 to 116 (AQLLDIDPQG…VEPNKEMQVA (97 aa)). The Inhibitor I9 domain maps to 35–115 (YIVVMKDRVS…FVEPNKEMQV (81 aa)). N-linked (GlcNAc...) asparagine glycans are attached at residues Asn-123, Asn-136, and Asn-150. The 273-residue stretch at 125–397 (TWGLSRISHK…NKLLYNGSGA (273 aa)) folds into the Peptidase S8 domain. Residues Asp-157 and His-188 each act as charge relay system in the active site. Residues Asn-249, Asn-305, and Asn-334 are each glycosylated (N-linked (GlcNAc...) asparagine). Catalysis depends on Ser-343, which acts as the Charge relay system. Residues Asn-385 and Asn-393 are each glycosylated (N-linked (GlcNAc...) asparagine).

It belongs to the peptidase S8 family.

It localises to the secreted. In terms of biological role, secreted subtilisin-like serine protease with keratinolytic activity that contributes to pathogenicity. The protein is Subtilisin-like protease 12 (SUB12) of Trichophyton verrucosum (strain HKI 0517).